Here is a 273-residue protein sequence, read N- to C-terminus: MSLTLAIYGKGGIGKSTTSSNLSAALALKGAKVLQIGCDPKHDSTFALTGTLQPTVIDVLTEVDFHHEEVSVEDVVHTGFAGVDTLESGGPPAGSGCGGYVVGETVKLLHEFGLYDKYDVIVFDVLGDVVCGGFSAPLNYADYGIIIACNDFDSIFAANRLCLAIKQKSARYRVELAGIIANRVDYELGGGTTLLEQFAETVGTRIIGRVPYHDLIRRSRLMGKTLFEMEGPGKEECTAPFLEMAEELLNRPRSTVPKPLGDREIFNVIGGWR.

Residues 12–17 (GIGKST) and K41 contribute to the ATP site. S16 lines the Mg(2+) pocket. 2 residues coordinate [4Fe-4S] cluster: C97 and C131. 182 to 183 (NR) serves as a coordination point for ATP.

Belongs to the NifH/BchL/ChlL family. Homodimer. Protochlorophyllide reductase is composed of three subunits; BchL, BchN and BchB. [4Fe-4S] cluster serves as cofactor.

The enzyme catalyses chlorophyllide a + oxidized 2[4Fe-4S]-[ferredoxin] + 2 ADP + 2 phosphate = protochlorophyllide a + reduced 2[4Fe-4S]-[ferredoxin] + 2 ATP + 2 H2O. It participates in porphyrin-containing compound metabolism; bacteriochlorophyll biosynthesis (light-independent). Component of the dark-operative protochlorophyllide reductase (DPOR) that uses Mg-ATP and reduced ferredoxin to reduce ring D of protochlorophyllide (Pchlide) to form chlorophyllide a (Chlide). This reaction is light-independent. The L component serves as a unique electron donor to the NB-component of the complex, and binds Mg-ATP. The sequence is that of Light-independent protochlorophyllide reductase iron-sulfur ATP-binding protein from Roseiflexus sp. (strain RS-1).